A 26-amino-acid chain; its full sequence is uncharacterized protein (26 aa).

It localises to the plastid. The protein localises to the chloroplast. This is an uncharacterized protein from Trieres chinensis (Marine centric diatom).